We begin with the raw amino-acid sequence, 396 residues long: Elongation factor Tu (396 aa).

One can recognise a tr-type G domain in the interval K10–E206. The interval G19 to T26 is G1. G19–T26 provides a ligand contact to GTP. T26 provides a ligand contact to Mg(2+). Residues G60–S64 form a G2 region. Residues D81 to G84 form a G3 region. GTP is bound by residues D81 to H85 and N136 to D139. A G4 region spans residues N136 to D139. Residues S174–L176 are G5.

It belongs to the TRAFAC class translation factor GTPase superfamily. Classic translation factor GTPase family. EF-Tu/EF-1A subfamily. In terms of assembly, monomer.

It is found in the cytoplasm. It catalyses the reaction GTP + H2O = GDP + phosphate + H(+). In terms of biological role, GTP hydrolase that promotes the GTP-dependent binding of aminoacyl-tRNA to the A-site of ribosomes during protein biosynthesis. This chain is Elongation factor Tu, found in Rhodopseudomonas palustris (strain BisA53).